We begin with the raw amino-acid sequence, 267 residues long: Transcription factor LBX1 (267 aa).

Residues 1–21 (MTSKDEAKSSASSVEERRRNA) show a composition bias toward basic and acidic residues. The segment at 1–36 (MTSKDEAKSSASSVEERRRNALDLLPPPANSNKPLT) is disordered. Residues 127–186 (RRKSRTAFTNHQIYELEKRFLYQKYLSPADRDQIAQQLGLTNAQVITWFQNRRAKLKRDL) constitute a DNA-binding region (homeobox). A disordered region spans residues 211–267 (SELEESGSERGNSRSRSPQLGLTSNHMPLSPSXPLTDQHASKECSEDEEDVEIDVDD). Polar residues predominate over residues 228 to 237 (PQLGLTSNHM). The segment covering 255–267 (SEDEEDVEIDVDD) has biased composition (acidic residues).

Expressed in all myoblasts that will populate body wall muscles as well as in a group of cells the migrate into the head.

Its subcellular location is the nucleus. Functionally, transcription factor that controls hypaxial muscle development by down-regulating myod1 and cdkn1b/p27, thereby allowing myoblasts to proliferate before the onset of terminal differentiation. This chain is Transcription factor LBX1, found in Xenopus laevis (African clawed frog).